Reading from the N-terminus, the 82-residue chain is Putative membrane protein insertion efficiency factor (82 aa).

The protein belongs to the UPF0161 family.

The protein localises to the cell inner membrane. In terms of biological role, could be involved in insertion of integral membrane proteins into the membrane. In Francisella tularensis subsp. holarctica (strain LVS), this protein is Putative membrane protein insertion efficiency factor.